The following is a 256-amino-acid chain: Trans-aconitate 2-methyltransferase (256 aa).

It belongs to the methyltransferase superfamily. Tam family.

It is found in the cytoplasm. The catalysed reaction is trans-aconitate + S-adenosyl-L-methionine = (E)-3-(methoxycarbonyl)pent-2-enedioate + S-adenosyl-L-homocysteine. Its function is as follows. Catalyzes the S-adenosylmethionine monomethyl esterification of trans-aconitate. The polypeptide is Trans-aconitate 2-methyltransferase (Agrobacterium fabrum (strain C58 / ATCC 33970) (Agrobacterium tumefaciens (strain C58))).